Consider the following 314-residue polypeptide: Cytochrome bo(3) ubiquinol oxidase subunit 2 (314 aa).

The first 23 residues, 1–23 (MSKKRYPRLFGILPFLGMLLLSG), serve as a signal peptide directing secretion. Residue C24 is the site of N-palmitoyl cysteine attachment. Residue C24 is the site of S-diacylglycerol cysteine attachment. The Periplasmic segment spans residues 24 to 42 (CNWTLLDPKGQVGIEQKNL). Residues 43–63 (ILIATGLMLLVVIPVIIMTVV) form a helical membrane-spanning segment. Topologically, residues 64 to 86 (FAWKYRASNKAATYTPDWSHSTK) are cytoplasmic. A helical transmembrane segment spans residues 87-107 (IEAAVWIIPILIIIALGYFTY). At 108–314 (HSTHKLDPYR…SMQPAAGAEE (207 aa)) the chain is on the periplasmic side. Positions 278-293 (YEGMNRGRPSHEEAGS) are enriched in basic and acidic residues. The interval 278–314 (YEGMNRGRPSHEEAGSKDLATTKGVESSMQPAAGAEE) is disordered.

This sequence belongs to the cytochrome c oxidase subunit 2 family. In terms of assembly, heterooctamer of two A chains, two B chains, two C chains and two D chains.

The protein resides in the cell inner membrane. Cytochrome bo(3) ubiquinol terminal oxidase is the component of the aerobic respiratory chain of E.coli that predominates when cells are grown at high aeration. Has proton pump activity across the membrane in addition to electron transfer, pumping 2 protons/electron. This Pseudomonas putida (Arthrobacter siderocapsulatus) protein is Cytochrome bo(3) ubiquinol oxidase subunit 2 (cyoA).